The following is a 571-amino-acid chain: Putative fatty-acid--CoA ligase fadD11 (571 aa).

The segment covering 1–19 has biased composition (low complexity); sequence MARLRGAGAAGRCRPGRFG. 2 disordered regions span residues 1–35 and 67–91; these read MARL…EPDR and RQRG…RCAH. Over residues 78-91 the composition is skewed to basic residues; it reads ATVRRSRSRQRCAH. Transmembrane regions (helical) follow at residues 314–334 and 431–451; these read TLAF…MSEL and ANIE…MAIG.

This sequence belongs to the ATP-dependent AMP-binding enzyme family.

The protein localises to the cell membrane. The chain is Putative fatty-acid--CoA ligase fadD11 (fadD11) from Mycobacterium tuberculosis (strain CDC 1551 / Oshkosh).